The primary structure comprises 272 residues: MLNRLLIFITLALAVRALDCSSKELQQYNLESVKGTYSISNIKSTPPSKTNITWSIGICEPIKDVADCPQNSDVCGITSILIDGKSPVVSEIIGFNSNVQKEYETIAEGDGGIIVKDKAVNWGDSLIDAEIHFICDKNAKENDLKLDKWDGQSVKLSFKSKAACITSDKDKKKNNGNNNDNNKNNDKKKDNGELWGWFTWIFIFLVLFLSIYYCGVRARGSSTIRETPFYFQSALKEVIENFIDLLKSLPSFIREIIERFTGSSGRAEYSAV.

The first 17 residues, methionine 1 to alanine 17, serve as a signal peptide directing secretion. The 149-residue stretch at leucine 18–threonine 166 folds into the MRH domain. At leucine 18–glutamate 193 the chain is on the lumenal side. Cystine bridges form between cysteine 20–cysteine 59, cysteine 68–cysteine 75, and cysteine 135–cysteine 164. Residues leucine 194–cysteine 214 traverse the membrane as a helical segment. Over glycine 215 to valine 272 the chain is Cytoplasmic.

The protein belongs to the ATG27 family.

It is found in the cytoplasmic vesicle membrane. Its subcellular location is the golgi apparatus membrane. The protein localises to the mitochondrion membrane. The protein resides in the preautophagosomal structure membrane. Functionally, effector of VPS34 phosphatidylinositol 3-phosphate kinase signaling. Regulates the cytoplasm to vacuole transport (Cvt) vesicle formation. Plays a role in ATG protein retrieval from the pre-autophagosomal structure (PAS) and is especially required for autophagy-dependent cycling of ATG9. This is Autophagy-related protein 27 (ATG27) from Lodderomyces elongisporus (strain ATCC 11503 / CBS 2605 / JCM 1781 / NBRC 1676 / NRRL YB-4239) (Yeast).